Consider the following 478-residue polypeptide: Phosphomannomutase (478 aa).

Residues 30–46 (FTPEVCARFTISFLTVM) form a helical membrane-spanning segment. The Phosphoserine intermediate role is filled by S111. Mg(2+)-binding residues include S111, D245, D247, and D249. Residues 265–284 (ILGLLCSLELAADAVAIPVS) traverse the membrane as a helical segment.

Belongs to the phosphohexose mutase family. Requires Mg(2+) as cofactor.

The protein localises to the cell membrane. The catalysed reaction is alpha-D-mannose 1-phosphate = D-mannose 6-phosphate. Its pathway is nucleotide-sugar biosynthesis; GDP-alpha-D-mannose biosynthesis; alpha-D-mannose 1-phosphate from D-fructose 6-phosphate: step 2/2. The protein operates within bacterial outer membrane biogenesis; LPS O-antigen biosynthesis. In terms of biological role, involved in GDP-mannose biosynthesis which serves as the activated sugar nucleotide precursor for mannose residues in cell surface polysaccharides. This enzyme participates in synthesis of the LPS group C2 O antigen. This Salmonella muenchen protein is Phosphomannomutase (manB).